The primary structure comprises 144 residues: Nucleoside diphosphate kinase (144 aa).

ATP is bound by residues Lys11, Phe59, Arg87, Thr93, Arg104, and Asn114. The Pros-phosphohistidine intermediate role is filled by His117.

Belongs to the NDK family. As to quaternary structure, homotetramer. Requires Mg(2+) as cofactor.

It localises to the cytoplasm. It catalyses the reaction a 2'-deoxyribonucleoside 5'-diphosphate + ATP = a 2'-deoxyribonucleoside 5'-triphosphate + ADP. The enzyme catalyses a ribonucleoside 5'-diphosphate + ATP = a ribonucleoside 5'-triphosphate + ADP. Major role in the synthesis of nucleoside triphosphates other than ATP. The ATP gamma phosphate is transferred to the NDP beta phosphate via a ping-pong mechanism, using a phosphorylated active-site intermediate. This chain is Nucleoside diphosphate kinase, found in Psychromonas ingrahamii (strain DSM 17664 / CCUG 51855 / 37).